The following is an 822-amino-acid chain: Sushi domain-containing protein 2 (822 aa).

Positions 1–27 (MKPALLPWALLLLATALGPGPGPTADA) are cleaved as a signal peptide. The 39-residue stretch at 28–66 (QESCSMRCGALDGPCSCHPTCSGLGTCCLDFRDFCLEIL) folds into the SMB domain. The Extracellular portion of the chain corresponds to 28–785 (QESCSMRCGA…PKCQPGRSYA (758 aa)). 7 disulfides stabilise this stretch: C31–C35, C31–C44, C35–C62, C42–C44, C42–C55, C48–C54, and C55–C62. 2 N-linked (GlcNAc...) asparagine glycosylation sites follow: N162 and N177. Residues 285–433 (PVAWARTQCQ…PDCPRYMQRR (149 aa)) form the AMOP domain. The VWFD domain maps to 445-639 (RLASAFGDPH…NWTVHNASSL (195 aa)). Residue N522 is glycosylated (N-linked (GlcNAc...) asparagine). Residues 723-780 (VSCGWLAPPPNGQKEGNRYLAGSTIYFHCDNGYSLAGAETSTCQADGTWSSPTPKCQP) enclose the Sushi domain. Intrachain disulfides connect C725/C765 and C751/C778. Residues 786–806 (VLLGIIFGGLAVVAAVALVYV) traverse the membrane as a helical segment. The Cytoplasmic portion of the chain corresponds to 807-822 (LLRRRKGNTHVWGAQP).

In terms of assembly, interacts with LGALS1; leads to an increased amount of LGALS1 on the cell surface. Interacts with GPR15LG; the interaction is direct. In terms of tissue distribution, highly expressed in breast cancer, but shows a restricted expression pattern in normal tissues such as adipose, adrenal gland, kidney, lung, mammary gland, placenta, thyroid, trachea, and uterus. Also expressed in colon; down-regulated in colon cancer tissues.

The protein localises to the cell membrane. Functionally, may be a cytokine receptor for GPR15LG. May be a tumor suppressor; together with GPR15LG has a growth inhibitory effect on colon cancer cells which includes G1 cell cycle arrest. May play a role in breast tumorigenesis. This Homo sapiens (Human) protein is Sushi domain-containing protein 2 (SUSD2).